We begin with the raw amino-acid sequence, 793 residues long: Netrin-B (793 aa).

The signal sequence occupies residues 1-22 (MVRATGTRMGLLLPIILALAIG). Positions 39–303 (KPRKCLPSFV…NLQDNDSADA (265 aa)) constitute a Laminin N-terminal domain. N-linked (GlcNAc...) asparagine glycans are attached at residues Asn103, Asn125, and Asn298. Residues 332 to 378 (SVVKRQGKHKGSAYEKHYQSKLAATTPPQQPPKVTPPGKVTPPSTAA) form a disordered region. Residues 367-378 (PPGKVTPPSTAA) are compositionally biased toward low complexity. 15 disulfides stabilise this stretch: Cys405–Cys414, Cys407–Cys461, Cys463–Cys472, Cys475–Cys495, Cys498–Cys507, Cys500–Cys525, Cys528–Cys537, Cys540–Cys558, Cys561–Cys573, Cys563–Cys580, Cys582–Cys591, Cys594–Cys608, Cys649–Cys738, Cys652–Cys740, and Cys665–Cys792. 3 Laminin EGF-like domains span residues 405 to 497 (CKCN…ECKM), 498 to 560 (CQCN…VCKR), and 561 to 610 (CDCH…PCIK). Residues 420–446 (SGSGTALSDQDDGQDEDTPSAPSLANH) form a disordered region. Residues 428–437 (DQDDGQDEDT) show a composition bias toward acidic residues. An NTR domain is found at 649 to 792 (CGKCKASPKK…KRFQRRARKC (144 aa)). Residue Asn746 is glycosylated (N-linked (GlcNAc...) asparagine).

Binds to unc-5 and fra receptors. In terms of tissue distribution, at 24 hr after puparium formation (APF), detected in the most anterior (oldest) L3, L4 and L5 lamina neurons (at protein level). At 48 hr APF, expressed in all L3, L4 and L5 neurons with slightly higher expression in the L3 neurons (at protein level). At the midline of developing CNS and in different subsets of neurons, muscles, and epidermal patches.

The protein resides in the secreted. It is found in the extracellular space. Its subcellular location is the extracellular matrix. The protein localises to the cytoplasm. It localises to the perinuclear region. Netrins control guidance of CNS commissural axons and peripheral motor axons. Its association with either fra or unc-5 receptors will lead to axon attraction or repulsion, respectively. While short-range repulsion requires both fra and unc-5 receptors, long-range repulsion only requires unc-5. The protein is Netrin-B (NetB) of Drosophila melanogaster (Fruit fly).